We begin with the raw amino-acid sequence, 494 residues long: 3-octaprenyl-4-hydroxybenzoate carboxy-lyase (494 aa).

Residue N172 participates in Mn(2+) binding. Prenylated FMN contacts are provided by residues 175-177 (IYR), 189-191 (RWL), and 194-195 (RG). A Mn(2+)-binding site is contributed by E238. The Proton donor role is filled by D294.

This sequence belongs to the UbiD family. Homohexamer. The cofactor is prenylated FMN. It depends on Mn(2+) as a cofactor.

It localises to the cell membrane. It catalyses the reaction a 4-hydroxy-3-(all-trans-polyprenyl)benzoate + H(+) = a 2-(all-trans-polyprenyl)phenol + CO2. It functions in the pathway cofactor biosynthesis; ubiquinone biosynthesis. In terms of biological role, catalyzes the decarboxylation of 3-octaprenyl-4-hydroxy benzoate to 2-octaprenylphenol, an intermediate step in ubiquinone biosynthesis. The protein is 3-octaprenyl-4-hydroxybenzoate carboxy-lyase of Albidiferax ferrireducens (strain ATCC BAA-621 / DSM 15236 / T118) (Rhodoferax ferrireducens).